The chain runs to 369 residues: GDSL esterase/lipase At5g42170 (369 aa).

A signal peptide spans 1–16; it reads MSRLVYVIFLLVVVEG. Residues Asn28 and Asn45 are each glycosylated (N-linked (GlcNAc...) asparagine). The active-site Nucleophile is the Ser57. Asn203 and Asn336 each carry an N-linked (GlcNAc...) asparagine glycan. Residues Asp344 and His347 contribute to the active site.

The protein belongs to the 'GDSL' lipolytic enzyme family.

The protein resides in the secreted. This Arabidopsis thaliana (Mouse-ear cress) protein is GDSL esterase/lipase At5g42170.